Consider the following 87-residue polypeptide: Bradykinin-potentiating peptide NDBP12 (87 aa).

Residues 1 to 22 (MNKRVLLVIFFVTLLVADEVNS) form the signal peptide. Residues 64 to 75 (PAEAPAPAAAAP) are compositionally biased toward low complexity. The segment at 64 to 87 (PAEAPAPAAAAPEEPPVEQRRRRR) is disordered.

It belongs to the non-disulfide-bridged peptide (NDBP) superfamily. Long chain multifunctional peptide (group 2) family. Expressed by the venom gland.

The protein resides in the secreted. Functionally, inhibits angiotensin-converting enzyme (ACE), but does not serve as substrate for the enzyme. Potentiates bradykinin (BK) on the isolated guinea pig ileum as well as the isolated rat uterus for contraction. Also potentiates in vivo the depressor effect of BK on arterial blood pressure in the normotensive anesthetized rat. The protein is Bradykinin-potentiating peptide NDBP12 of Lychas mucronatus (Chinese swimming scorpion).